A 488-amino-acid polypeptide reads, in one-letter code: Zinc metalloproteinase-disintegrin agkistin (488 aa).

An N-terminal signal peptide occupies residues 1–20 (MIQVLLVTICLAVFPYQGSS). The propeptide occupies 21–195 (IILESGNVND…NFPPDGRIEF (175 aa)). One can recognise a Peptidase M12B domain in the interval 198–394 (RYIELVIVAD…NPLASYCLYN (197 aa)). Residue Glu201 participates in Ca(2+) binding. An N-linked (GlcNAc...) asparagine glycan is attached at Asn258. Residue Asp285 coordinates Ca(2+). 3 disulfide bridges follow: Cys309–Cys391, Cys349–Cys373, and Cys351–Cys356. His334 provides a ligand contact to Zn(2+). Glu335 is a catalytic residue. Positions 338 and 344 each coordinate Zn(2+). Positions 391, 394, 406, 409, 413, 416, and 419 each coordinate Ca(2+). A Disintegrin domain is found at 404 to 488 (PPVCGNYYLE…AGCPRNPSHA (85 aa)). Disulfide bonds link Cys407–Cys426, Cys418–Cys436, Cys420–Cys431, Cys430–Cys453, Cys444–Cys450, Cys449–Cys474, and Cys462–Cys481. The Cell attachment site signature appears at 466 to 468 (RGD).

It belongs to the venom metalloproteinase (M12B) family. P-II subfamily. P-IIb sub-subfamily. In terms of assembly, monomer. Requires Zn(2+) as cofactor. Expressed by the venom gland.

It is found in the secreted. Inhibits ADP-induced human platelet aggregation, inhibits bovine aortic endothelial cells (BAEC) migration, has anti-angiogenic activity and induces BAEC and human micro-vascular endothelial cell (HMEC) apoptosis. The metalloproteinase domain may act in hemorrhage. The protein is Zinc metalloproteinase-disintegrin agkistin of Gloydius halys (Chinese water mocassin).